A 520-amino-acid polypeptide reads, in one-letter code: Bifunctional purine biosynthesis protein PurH (520 aa).

One can recognise an MGS-like domain in the interval 1-146 (MAPVALLSVS…KNHADVAVLT (146 aa)).

The protein belongs to the PurH family.

It carries out the reaction (6R)-10-formyltetrahydrofolate + 5-amino-1-(5-phospho-beta-D-ribosyl)imidazole-4-carboxamide = 5-formamido-1-(5-phospho-D-ribosyl)imidazole-4-carboxamide + (6S)-5,6,7,8-tetrahydrofolate. The enzyme catalyses IMP + H2O = 5-formamido-1-(5-phospho-D-ribosyl)imidazole-4-carboxamide. It functions in the pathway purine metabolism; IMP biosynthesis via de novo pathway; 5-formamido-1-(5-phospho-D-ribosyl)imidazole-4-carboxamide from 5-amino-1-(5-phospho-D-ribosyl)imidazole-4-carboxamide (10-formyl THF route): step 1/1. Its pathway is purine metabolism; IMP biosynthesis via de novo pathway; IMP from 5-formamido-1-(5-phospho-D-ribosyl)imidazole-4-carboxamide: step 1/1. This chain is Bifunctional purine biosynthesis protein PurH, found in Synechococcus sp. (strain CC9902).